The primary structure comprises 167 residues: Claudin domain-containing protein 2 (167 aa).

A run of 4 helical transmembrane segments spans residues 13-32 (LLNL…NYWT), 61-81 (VSAA…GIGI), 96-116 (TIVL…VYTS), and 130-150 (YFFG…FLLA).

Belongs to the PMP-22/EMP/MP20 family.

It is found in the membrane. This chain is Claudin domain-containing protein 2 (Cldnd2), found in Mus musculus (Mouse).